We begin with the raw amino-acid sequence, 372 residues long: UDP-N-acetylglucosamine--N-acetylmuramyl-(pentapeptide) pyrophosphoryl-undecaprenol N-acetylglucosamine transferase (372 aa).

Residues 16–18, asparagine 128, arginine 164, serine 192, isoleucine 250, and glutamine 295 each bind UDP-N-acetyl-alpha-D-glucosamine; that span reads TGG.

It belongs to the glycosyltransferase 28 family. MurG subfamily.

The protein resides in the cell inner membrane. The enzyme catalyses di-trans,octa-cis-undecaprenyl diphospho-N-acetyl-alpha-D-muramoyl-L-alanyl-D-glutamyl-meso-2,6-diaminopimeloyl-D-alanyl-D-alanine + UDP-N-acetyl-alpha-D-glucosamine = di-trans,octa-cis-undecaprenyl diphospho-[N-acetyl-alpha-D-glucosaminyl-(1-&gt;4)]-N-acetyl-alpha-D-muramoyl-L-alanyl-D-glutamyl-meso-2,6-diaminopimeloyl-D-alanyl-D-alanine + UDP + H(+). The protein operates within cell wall biogenesis; peptidoglycan biosynthesis. Functionally, cell wall formation. Catalyzes the transfer of a GlcNAc subunit on undecaprenyl-pyrophosphoryl-MurNAc-pentapeptide (lipid intermediate I) to form undecaprenyl-pyrophosphoryl-MurNAc-(pentapeptide)GlcNAc (lipid intermediate II). This Paraburkholderia phytofirmans (strain DSM 17436 / LMG 22146 / PsJN) (Burkholderia phytofirmans) protein is UDP-N-acetylglucosamine--N-acetylmuramyl-(pentapeptide) pyrophosphoryl-undecaprenol N-acetylglucosamine transferase.